The primary structure comprises 96 residues: Protein RnfH (96 aa).

It belongs to the UPF0125 (RnfH) family.

In Salmonella agona (strain SL483), this protein is Protein RnfH.